Reading from the N-terminus, the 125-residue chain is Small ribosomal subunit protein bS6 (125 aa).

The disordered stretch occupies residues 96–125 (VTEASPMKAAKEERKPLAEVENNDFEDAEE). A compositionally biased stretch (basic and acidic residues) spans 104–113 (AAKEERKPLA). A compositionally biased stretch (acidic residues) spans 116–125 (ENNDFEDAEE).

It belongs to the bacterial ribosomal protein bS6 family.

Binds together with bS18 to 16S ribosomal RNA. In Haemophilus influenzae (strain 86-028NP), this protein is Small ribosomal subunit protein bS6.